We begin with the raw amino-acid sequence, 721 residues long: DNA ligase (721 aa).

Residues 42–46, 91–92, and glutamate 125 each bind NAD(+); these read DAEYD and SL. The N6-AMP-lysine intermediate role is filled by lysine 127. Residues arginine 148, glutamate 184, lysine 300, and lysine 324 each coordinate NAD(+). Positions 430, 433, 448, and 454 each coordinate Zn(2+). The region spanning 642–721 is the BRCT domain; the sequence is STGSPVEGKT…DAWFTLVGEE (80 aa).

The protein belongs to the NAD-dependent DNA ligase family. LigA subfamily. Mg(2+) is required as a cofactor. The cofactor is Mn(2+).

It catalyses the reaction NAD(+) + (deoxyribonucleotide)n-3'-hydroxyl + 5'-phospho-(deoxyribonucleotide)m = (deoxyribonucleotide)n+m + AMP + beta-nicotinamide D-nucleotide.. In terms of biological role, DNA ligase that catalyzes the formation of phosphodiester linkages between 5'-phosphoryl and 3'-hydroxyl groups in double-stranded DNA using NAD as a coenzyme and as the energy source for the reaction. It is essential for DNA replication and repair of damaged DNA. In Brucella anthropi (strain ATCC 49188 / DSM 6882 / CCUG 24695 / JCM 21032 / LMG 3331 / NBRC 15819 / NCTC 12168 / Alc 37) (Ochrobactrum anthropi), this protein is DNA ligase.